A 657-amino-acid polypeptide reads, in one-letter code: MQKASTSAGAKTAGNRKMQKSPNNGAAKAQKSAKTVDTVTDSELLYNPPAFLTAAEKERRKYLQARVRAEGESASTSSKSNATRPTDRKRHLQAEDPLPADANNNDTNKGGKVAQESASTQAAGTTKRKQPRSQGLEQTSPIMVNGEALACPLVRKSLPAAEAAKSCPLPSKKDSVTKSPMTVHEAPKVDSATSNSNEKQLATMPVDIHKTDSIEEGRRVLEWLINPVAVNQFFADFWENNACVVQRKNPNYYSKLMSFKMIDDILMRNRVEFGTNLDVTIYRNGKRETLNPEGRAFPSVVWDFYAEGCSIRILNPSTYLLGLRQVCSIMQEFFHCLVGANVYLTPPNSQGFAPHYDDIEAFVIQVEGRKRWRLYEPPEKADQLSRTSSGNYDQKQLGEPIIDEVLEAGDLLYFPRGTVHQAITEKGHFSLHITLSVYQQQAYANLLETLMPIVLKKAVKKSVALRRGLPLHTFHVLGEVQRTNRCESRDQLVENVQKLVSKYLMPSTQDIDEAVDQLAKKFQHEALPPIILPEEKVRTVFGSRSISDQEGNSVCDYEFDTDTSVRLLRANILRLVNEDDGSVKIYHHVNNALEYCKYEPNFLEILQEEAIAVEVLISAYPYYITVDQLPLKTVARKVEVATALWEHGLLMTEKPFK.

2 disordered regions span residues Met-1 to Pro-141 and Lys-165 to Glu-198. Residues Ser-32–Asp-41 are compositionally biased toward polar residues. Residues Ala-55–Gly-71 are compositionally biased toward basic and acidic residues. Polar residues-rich tracts occupy residues Ser-73–Arg-84 and Arg-132–Pro-141. Residue Ser-133 is modified to Phosphoserine. At Thr-139 the chain carries Phosphothreonine. A Phosphoserine modification is found at Ser-140. The JmjC domain maps to Asn-315–Val-454. His-355, Asp-357, and His-420 together coordinate Fe cation.

It belongs to the ROX family. NO66 subfamily. It depends on Fe(2+) as a cofactor.

Its subcellular location is the nucleus. It carries out the reaction N(6),N(6)-dimethyl-L-lysyl(36)-[histone H3] + 2 2-oxoglutarate + 2 O2 = L-lysyl(36)-[histone H3] + 2 formaldehyde + 2 succinate + 2 CO2. Oxygenase that can act as both a histone lysine demethylase and a ribosomal histidine hydroxylase. Specifically demethylates 'Lys-4' (H3K4me) and 'Lys-36' (H3K36me) of histone H3, thereby playing a central role in histone code. This chain is Bifunctional lysine-specific demethylase and histidyl-hydroxylase NO66, found in Drosophila erecta (Fruit fly).